The chain runs to 101 residues: Small ribosomal subunit protein uS14A (101 aa).

The segment at 31–73 is disordered; that stretch reads IKSPSTTPEARVAAQSELNRQPRDASPVRVRNRDSVDGRPRGH. Residues 61 to 70 show a composition bias toward basic and acidic residues; the sequence is RNRDSVDGRP.

This sequence belongs to the universal ribosomal protein uS14 family. Part of the 30S ribosomal subunit. Contacts proteins S3 and S10.

In terms of biological role, binds 16S rRNA, required for the assembly of 30S particles and may also be responsible for determining the conformation of the 16S rRNA at the A site. This chain is Small ribosomal subunit protein uS14A, found in Mycolicibacterium vanbaalenii (strain DSM 7251 / JCM 13017 / BCRC 16820 / KCTC 9966 / NRRL B-24157 / PYR-1) (Mycobacterium vanbaalenii).